The chain runs to 264 residues: Flagellar brake protein YcgR 1 (264 aa).

Residues 132–249 enclose the PilZ domain; the sequence is QRREFFRLES…RLAMIERYIA (118 aa).

Belongs to the YcgR family. In terms of assembly, monomer. Interacts with the flagellar basal bodies.

It localises to the bacterial flagellum basal body. In terms of biological role, acts as a flagellar brake, regulating swimming and swarming in a bis-(3'-5') cyclic diguanylic acid (c-di-GMP)-dependent manner. Binds 1 c-di-GMP dimer per subunit. Increasing levels of c-di-GMP lead to decreased motility. This chain is Flagellar brake protein YcgR 1, found in Dechloromonas aromatica (strain RCB).